The following is a 344-amino-acid chain: Sorting nexin-16 (344 aa).

Pro residues predominate over residues 1 to 10; the sequence is MATPYVPVPM. 2 disordered regions span residues 1 to 66 and 81 to 107; these read MATP…NTSS and ASSI…EDRP. Over residues 14 to 26 the composition is skewed to polar residues; the sequence is NSASSFTTNRNQR. The span at 27 to 40 shows a compositional bias: low complexity; the sequence is SSSFGSVSTSSNSS. The segment covering 41–66 has biased composition (polar residues); it reads KGQLEDSNMGNFKQTSVPDQMDNTSS. One can recognise a PX domain in the interval 105–218; that stretch reads DRPSTPTILG…EFLCLDDPPG (114 aa). A 1,2-diacyl-sn-glycero-3-phospho-(1D-myo-inositol-3-phosphate) contacts are provided by Arg-144, Thr-146, and Arg-184. Ser-222 is modified (phosphoserine). The stretch at 223-278 forms a coiled coil; the sequence is LEESRAFCETLEETNYRLQKELLEKQKEMESLKKLLSEKQLHIDTLENRIRTLSLE.

The protein belongs to the sorting nexin family. As to quaternary structure, homooligomer. Interacts with EGFR. Detected in placenta, lung, liver,heart and pancreas.

It is found in the early endosome membrane. It localises to the late endosome membrane. Its subcellular location is the cytoplasm. The protein localises to the lysosome. In terms of biological role, may be involved in several stages of intracellular trafficking. Plays a role in protein transport from early to late endosomes. Plays a role in protein transport to the lysosome. Promotes degradation of EGFR after EGF signaling. Plays a role in intracellular transport of vesicular stomatitis virus nucleocapsids from the endosome to the cytoplasm. This Homo sapiens (Human) protein is Sorting nexin-16 (SNX16).